A 37-amino-acid polypeptide reads, in one-letter code: Large ribosomal subunit protein bL36 (37 aa).

It belongs to the bacterial ribosomal protein bL36 family.

This Variovorax paradoxus (strain S110) protein is Large ribosomal subunit protein bL36.